The primary structure comprises 243 residues: 23S rRNA (guanosine-2'-O-)-methyltransferase RlmB (243 aa).

Gly-196, Ile-216, and Leu-225 together coordinate S-adenosyl-L-methionine.

The protein belongs to the class IV-like SAM-binding methyltransferase superfamily. RNA methyltransferase TrmH family. RlmB subfamily. As to quaternary structure, homodimer.

It localises to the cytoplasm. It carries out the reaction guanosine(2251) in 23S rRNA + S-adenosyl-L-methionine = 2'-O-methylguanosine(2251) in 23S rRNA + S-adenosyl-L-homocysteine + H(+). Functionally, specifically methylates the ribose of guanosine 2251 in 23S rRNA. The polypeptide is 23S rRNA (guanosine-2'-O-)-methyltransferase RlmB (Salmonella typhimurium (strain LT2 / SGSC1412 / ATCC 700720)).